Consider the following 188-residue polypeptide: Chitin synthase 1 (188 aa).

The protein belongs to the chitin synthase family. Class I subfamily.

The protein localises to the cell membrane. The enzyme catalyses [(1-&gt;4)-N-acetyl-beta-D-glucosaminyl](n) + UDP-N-acetyl-alpha-D-glucosamine = [(1-&gt;4)-N-acetyl-beta-D-glucosaminyl](n+1) + UDP + H(+). In terms of biological role, polymerizes chitin, a structural polymer of the cell wall and septum, by transferring the sugar moiety of UDP-GlcNAc to the non-reducing end of the growing chitin polymer. This Ajellomyces dermatitidis (Blastomyces dermatitidis) protein is Chitin synthase 1 (CHS1).